We begin with the raw amino-acid sequence, 201 residues long: 3-isopropylmalate dehydratase small subunit (201 aa).

Belongs to the LeuD family. LeuD type 1 subfamily. As to quaternary structure, heterodimer of LeuC and LeuD.

The enzyme catalyses (2R,3S)-3-isopropylmalate = (2S)-2-isopropylmalate. It functions in the pathway amino-acid biosynthesis; L-leucine biosynthesis; L-leucine from 3-methyl-2-oxobutanoate: step 2/4. Its function is as follows. Catalyzes the isomerization between 2-isopropylmalate and 3-isopropylmalate, via the formation of 2-isopropylmaleate. This Sinorhizobium medicae (strain WSM419) (Ensifer medicae) protein is 3-isopropylmalate dehydratase small subunit.